Consider the following 197-residue polypeptide: Small ribosomal subunit protein uS5 (197 aa).

The segment at 1 to 27 (MAEREQRGGRDQRGGGRERKEREERDS) is disordered. The S5 DRBM domain maps to 29–92 (FVDKLVHINR…ESAKRNLTRV (64 aa)).

This sequence belongs to the universal ribosomal protein uS5 family. In terms of assembly, part of the 30S ribosomal subunit. Contacts proteins S4 and S8.

With S4 and S12 plays an important role in translational accuracy. Functionally, located at the back of the 30S subunit body where it stabilizes the conformation of the head with respect to the body. In Bradyrhizobium diazoefficiens (strain JCM 10833 / BCRC 13528 / IAM 13628 / NBRC 14792 / USDA 110), this protein is Small ribosomal subunit protein uS5.